Consider the following 474-residue polypeptide: Cryptochrome DASH (474 aa).

The region spanning 2 to 136 (DTAVVWFRDD…ALRQRWTHTL (135 aa)) is the Photolyase/cryptochrome alpha/beta domain. Residues 161-171 (EAAATVRDPRS) show a composition bias toward basic and acidic residues. The interval 161–202 (EAAATVRDPRSAPETVPTPDGLTPGPVPTVESLGVSEPPTDD) is disordered.

The protein belongs to the DNA photolyase class-1 family. FAD is required as a cofactor. It depends on (6R)-5,10-methylene-5,6,7,8-tetrahydrofolate as a cofactor.

Functionally, may have a photoreceptor function. Binds DNA; probably functions as a transcriptional repressor. This is Cryptochrome DASH (cry) from Natronomonas pharaonis (strain ATCC 35678 / DSM 2160 / CIP 103997 / JCM 8858 / NBRC 14720 / NCIMB 2260 / Gabara) (Halobacterium pharaonis).